A 360-amino-acid polypeptide reads, in one-letter code: Peptide chain release factor 1 (360 aa).

The residue at position 235 (glutamine 235) is an N5-methylglutamine. The disordered stretch occupies residues 285–313; that stretch reads KRQQAEASTRRNLLGSGDRSDRNRTYNFP.

The protein belongs to the prokaryotic/mitochondrial release factor family. In terms of processing, methylated by PrmC. Methylation increases the termination efficiency of RF1.

The protein resides in the cytoplasm. Its function is as follows. Peptide chain release factor 1 directs the termination of translation in response to the peptide chain termination codons UAG and UAA. This chain is Peptide chain release factor 1, found in Klebsiella pneumoniae (strain 342).